The following is a 176-amino-acid chain: Nascent polypeptide-associated complex subunit alpha (176 aa).

Residues 16–80 (PKNEKKAREL…AKVDDMNQRI (65 aa)) form the NAC-A/B domain. The segment at 83–110 (AQAAQAAETDAHAGHTHSHGEEDKSPEA) is disordered. Positions 91-110 (TDAHAGHTHSHGEEDKSPEA) are enriched in basic and acidic residues. Residues 138–175 (LDAKDIDIIVEQTQVSRAKAVKALRKHDGDMVNAIMEL) form the UBA domain.

This sequence belongs to the NAC-alpha family. Part of the nascent polypeptide-associated complex (NAC), consisting of EGD2 and EGD1. NAC associates with ribosomes via EGD1.

It localises to the cytoplasm. The protein resides in the nucleus. In terms of biological role, component of the nascent polypeptide-associated complex (NAC), a dynamic component of the ribosomal exit tunnel, protecting the emerging polypeptides from interaction with other cytoplasmic proteins to ensure appropriate nascent protein targeting. The NAC complex also promotes mitochondrial protein import by enhancing productive ribosome interactions with the outer mitochondrial membrane and blocks the inappropriate interaction of ribosomes translating non-secretory nascent polypeptides with translocation sites in the membrane of the endoplasmic reticulum. EGD2 may also be involved in transcription regulation. The sequence is that of Nascent polypeptide-associated complex subunit alpha (EGD2) from Scheffersomyces stipitis (strain ATCC 58785 / CBS 6054 / NBRC 10063 / NRRL Y-11545) (Yeast).